Here is a 170-residue protein sequence, read N- to C-terminus: Archaemetzincin (170 aa).

H110 contacts Zn(2+). Residue E111 is the Proton acceptor of the active site. H114, H120, C121, C125, C144, and C147 together coordinate Zn(2+).

It belongs to the peptidase M54 family. As to quaternary structure, monomer. It depends on Zn(2+) as a cofactor.

Probable zinc metalloprotease whose natural substrate is unknown. In Nanoarchaeum equitans (strain Kin4-M), this protein is Archaemetzincin.